The chain runs to 82 residues: Antimicrobial peptide Smp43 (82 aa).

A signal peptide spans 1–22 (MNRKLLLVTLMVTMLVMQPAEA). The propeptide occupies 66 to 82 (EAGQMPFDEFMDILYES).

The protein belongs to the non-disulfide-bridged peptide (NDBP) superfamily. Long chain multifunctional peptide (group 2) family. In terms of tissue distribution, expressed by the venom gland.

The protein localises to the secreted. Its subcellular location is the target cell membrane. Functionally, antimicrobial peptide with moderate activity against Gram-positive bacteria and Gram-negative bacteria, as well as low activity against fungi. Acts by inducing bacterial membrane disruption. Shows activity against B.subtilis (MIC=4 ug/ml), S.epidermidis (MIC=64 ug/ml), S.aureus (MIC=32 ug/ml), E.coli (MIC=128 ug/ml), K.pneumoniae (MIC=64 ug/ml), P.aeruginosa (MIC=64 ug/ml), and C.albicans (MIC=128 ug/ml). Does not show hemolysis activity. This Scorpio palmatus (Israeli golden scorpion) protein is Antimicrobial peptide Smp43.